The following is a 218-amino-acid chain: Small ribosomal subunit protein uS3c (218 aa).

A KH type-2 domain is found at valine 47–threonine 118.

This sequence belongs to the universal ribosomal protein uS3 family. In terms of assembly, part of the 30S ribosomal subunit.

The protein localises to the plastid. The protein resides in the chloroplast. This is Small ribosomal subunit protein uS3c (rps3) from Vitis vinifera (Grape).